Here is a 226-residue protein sequence, read N- to C-terminus: Cytidylate kinase (226 aa).

11 to 19 provides a ligand contact to ATP; sequence GPASAGKST.

The protein belongs to the cytidylate kinase family. Type 1 subfamily.

It is found in the cytoplasm. The catalysed reaction is CMP + ATP = CDP + ADP. It catalyses the reaction dCMP + ATP = dCDP + ADP. The polypeptide is Cytidylate kinase (Pediococcus pentosaceus (strain ATCC 25745 / CCUG 21536 / LMG 10740 / 183-1w)).